The primary structure comprises 471 residues: Serine/threonine-protein kinase AtPK2/AtPK19 (471 aa).

Residues 1-21 (MVSSQCSVANKNQTGKPFQKH) form a disordered region. The region spanning 140 to 395 (FEVLKVVGQG…AEEIKKHKWF (256 aa)) is the Protein kinase domain. ATP contacts are provided by residues 146-154 (VGQGAFGKV) and K169. Catalysis depends on D263, which acts as the Proton acceptor. The segment at 281 to 307 (DFGLAKEFEENTRSNSMCGTTEYMAPE) is activation loop. Residue S296 is modified to Phosphoserine; by PDPK1. Positions 396 to 466 (KAINWKKLEA…VRPPHSFLHR (71 aa)) constitute an AGC-kinase C-terminal domain. The residue at position 455 (T455) is a Phosphothreonine; by TOR.

This sequence belongs to the protein kinase superfamily. AGC Ser/Thr protein kinase family. S6 kinase subfamily. Interacts with TAP46. Binds to MRF1. In terms of processing, undergoes serine-specific autophosphorylation. Phosphorylated at Thr-455 by TOR.

The enzyme catalyses L-seryl-[protein] + ATP = O-phospho-L-seryl-[protein] + ADP + H(+). It catalyses the reaction L-threonyl-[protein] + ATP = O-phospho-L-threonyl-[protein] + ADP + H(+). Activated by PDK1. Its function is as follows. Downstream effector of TOR signaling pathway. May be involved in adaptation of plant to cold or high-salt conditions. Mediates the phosphorylation of MRFs (e.g. MRF1). This is Serine/threonine-protein kinase AtPK2/AtPK19 (ATPK2) from Arabidopsis thaliana (Mouse-ear cress).